A 188-amino-acid polypeptide reads, in one-letter code: GTP cyclohydrolase 1 (188 aa).

C76, H79, and C148 together coordinate Zn(2+).

It belongs to the GTP cyclohydrolase I family. Homomer.

It catalyses the reaction GTP + H2O = 7,8-dihydroneopterin 3'-triphosphate + formate + H(+). It participates in cofactor biosynthesis; 7,8-dihydroneopterin triphosphate biosynthesis; 7,8-dihydroneopterin triphosphate from GTP: step 1/1. The polypeptide is GTP cyclohydrolase 1 (Pelotomaculum thermopropionicum (strain DSM 13744 / JCM 10971 / SI)).